We begin with the raw amino-acid sequence, 473 residues long: ATP synthase subunit beta (473 aa).

An ATP-binding site is contributed by 153-160 (GGAGVGKT).

It belongs to the ATPase alpha/beta chains family. F-type ATPases have 2 components, CF(1) - the catalytic core - and CF(0) - the membrane proton channel. CF(1) has five subunits: alpha(3), beta(3), gamma(1), delta(1), epsilon(1). CF(0) has three main subunits: a(1), b(2) and c(9-12). The alpha and beta chains form an alternating ring which encloses part of the gamma chain. CF(1) is attached to CF(0) by a central stalk formed by the gamma and epsilon chains, while a peripheral stalk is formed by the delta and b chains.

Its subcellular location is the cell inner membrane. It catalyses the reaction ATP + H2O + 4 H(+)(in) = ADP + phosphate + 5 H(+)(out). Functionally, produces ATP from ADP in the presence of a proton gradient across the membrane. The catalytic sites are hosted primarily by the beta subunits. The sequence is that of ATP synthase subunit beta from Rickettsia massiliae (strain Mtu5).